Reading from the N-terminus, the 1233-residue chain is uncharacterized protein (1233 aa).

Disordered regions lie at residues 32 to 51, 510 to 529, and 882 to 915; these read SETS…TPKP, ATTN…PVPD, and EVIE…IERS. 2 stretches are compositionally biased toward acidic residues: residues 513–529 and 882–905; these read NEEE…PVPD and EVIE…EDEG. A compositionally biased stretch (basic and acidic residues) spans 906-915; that stretch reads DNKQRVIERS.

This is an uncharacterized protein from Dictyostelium discoideum (Social amoeba).